We begin with the raw amino-acid sequence, 730 residues long: Cyclin-T2 (730 aa).

The interval methionine 1 to serine 300 is interaction with MDFIC and MDFI. The region spanning phenylalanine 12–isoleucine 147 is the Cyclin N-terminal domain. The interval arginine 250–serine 300 is interaction with POLR2A. Composition is skewed to polar residues over residues threonine 341 to glutamate 350 and threonine 360 to leucine 389. Residues threonine 341–isoleucine 430 form a disordered region. Residues aspartate 398 to histidine 412 show a composition bias toward basic and acidic residues. A Glycyl lysine isopeptide (Lys-Gly) (interchain with G-Cter in SUMO2) cross-link involves residue lysine 407. Position 480 is a phosphoserine (serine 480). Residues aspartate 497 to lysine 652 form a disordered region. Composition is skewed to basic and acidic residues over residues serine 517–glycine 543 and isoleucine 552–serine 565. Residues serine 566 to serine 578 are compositionally biased toward basic residues. Over residues histidine 579–lysine 588 the composition is skewed to low complexity. A Phosphoserine modification is found at serine 601. Low complexity-rich tracts occupy residues serine 606–serine 616 and serine 637–lysine 652.

The protein belongs to the cyclin family. Cyclin C subfamily. Interacts with CDK9 to form P-TEFb. Interacts with POLR2A (via the C-terminal domain (CTD)); mediates transcriptional activity. Interacts with HEXIM1; mediates formation of a tripartite complex with KPNA2. Interacts with HEXIM2. Interacts with PKN1; enhances MYOD1-dependent transcription. P-TEFB complex interacts with RB1; promotes phosphorylation of RB1. P-TEFB complex interacts with MYOD1; promotes the transcriptional activity of MYOD1 through its CDK9-mediated phosphorylation. Interacts with MDFI and MDFIC. Interacts with MON1B; down-regulates CCNT2-mediated activation of viral promoters during herpes simplex virus 1/HHV-1 infection. As to quaternary structure, (Microbial infection) Interacts with HIV-2 and SIV Tat. Does not bind efficiently to the transactivation domain of the HIV-1 Tat. Ubiquitously expressed.

It localises to the cytoplasm. It is found in the perinuclear region. The protein resides in the nucleus. Its function is as follows. Regulatory subunit of the cyclin-dependent kinase pair (CDK9/cyclin T) complex, also called positive transcription elongation factor B (P-TEFB), which is proposed to facilitate the transition from abortive to production elongation by phosphorylating the CTD (carboxy-terminal domain) of the large subunit of RNA polymerase II (RNAP II). The activity of this complex is regulated by binding with 7SK snRNA. Plays a role during muscle differentiation; P-TEFB complex interacts with MYOD1; this tripartite complex promotes the transcriptional activity of MYOD1 through its CDK9-mediated phosphorylation and binds the chromatin of promoters and enhancers of muscle-specific genes; this event correlates with hyperphosphorylation of the CTD domain of RNA pol II. In addition, enhances MYOD1-dependent transcription through interaction with PKN1. Involved in early embryo development. (Microbial infection) Promotes transcriptional activation of early and late herpes simplex virus 1/HHV-1 promoters. The chain is Cyclin-T2 from Homo sapiens (Human).